The primary structure comprises 510 residues: Ribonuclease Y (510 aa).

A helical membrane pass occupies residues 2–22 (IYIIFSSIFAGFILGFLVRVF). Residues 198 to 258 (TVASVELPND…IRKELAKRTL (61 aa)) form the KH domain. One can recognise an HD domain in the interval 324–419 (VLSHSKETAI…VQIADAISAS (96 aa)).

Belongs to the RNase Y family.

It is found in the cell membrane. Endoribonuclease that initiates mRNA decay. This chain is Ribonuclease Y, found in Borreliella burgdorferi (strain ATCC 35210 / DSM 4680 / CIP 102532 / B31) (Borrelia burgdorferi).